We begin with the raw amino-acid sequence, 284 residues long: Bifunctional protein FolD (284 aa).

Residues 165 to 167 and serine 190 contribute to the NADP(+) site; that span reads GRS.

The protein belongs to the tetrahydrofolate dehydrogenase/cyclohydrolase family. In terms of assembly, homodimer.

The catalysed reaction is (6R)-5,10-methylene-5,6,7,8-tetrahydrofolate + NADP(+) = (6R)-5,10-methenyltetrahydrofolate + NADPH. It catalyses the reaction (6R)-5,10-methenyltetrahydrofolate + H2O = (6R)-10-formyltetrahydrofolate + H(+). It functions in the pathway one-carbon metabolism; tetrahydrofolate interconversion. Its function is as follows. Catalyzes the oxidation of 5,10-methylenetetrahydrofolate to 5,10-methenyltetrahydrofolate and then the hydrolysis of 5,10-methenyltetrahydrofolate to 10-formyltetrahydrofolate. In Streptococcus agalactiae serotype Ia (strain ATCC 27591 / A909 / CDC SS700), this protein is Bifunctional protein FolD.